Here is a 212-residue protein sequence, read N- to C-terminus: uncharacterized protein (212 aa).

An N-terminal signal peptide occupies residues Met-1–Gly-18. Residues Ile-186 to Val-208 form a helical membrane-spanning segment.

It to A.fulgidus AF_0540.

It localises to the membrane. This is an uncharacterized protein from Archaeoglobus fulgidus (strain ATCC 49558 / DSM 4304 / JCM 9628 / NBRC 100126 / VC-16).